Here is a 168-residue protein sequence, read N- to C-terminus: uncharacterized protein (168 aa).

A helical membrane pass occupies residues 24 to 44 (FIGIVLFLAVLIIGILILILF). Disordered stretches follow at residues 69-92 (SPSSSFLINNNNNNNNYHQNNNSN) and 142-168 (NNNNNNNNNPPTNISNKLNKNGETKNI). A compositionally biased stretch (low complexity) spans 142-157 (NNNNNNNNNPPTNISN).

The protein resides in the membrane. This is an uncharacterized protein from Dictyostelium discoideum (Social amoeba).